A 618-amino-acid chain; its full sequence is uncharacterized protein (618 aa).

It to Rhizobium NGR234A y4qD.

This is an uncharacterized protein from Sinorhizobium fredii (strain NBRC 101917 / NGR234).